The chain runs to 141 residues: Guanyl-specific ribonuclease Sa3 (141 aa).

Residues 1-36 (MRIPPRLVALAGAAAVAATLIAGPVAAAAPASHAVA) constitute a signal peptide (or 43). Cys52 and Cys141 are joined by a disulfide. Catalysis depends on Glu99, which acts as the Proton acceptor. Residue His130 is the Proton donor of the active site.

The protein belongs to the ribonuclease N1/T1 family.

Its subcellular location is the secreted. The catalysed reaction is [RNA] containing guanosine + H2O = an [RNA fragment]-3'-guanosine-3'-phosphate + a 5'-hydroxy-ribonucleotide-3'-[RNA fragment].. In Kitasatospora aureofaciens (Streptomyces aureofaciens), this protein is Guanyl-specific ribonuclease Sa3 (rnaSA3).